The sequence spans 418 residues: 3-isopropylmalate dehydratase large subunit (418 aa).

Cys297, Cys357, and Cys360 together coordinate [4Fe-4S] cluster.

It belongs to the aconitase/IPM isomerase family. LeuC type 2 subfamily. As to quaternary structure, heterodimer of LeuC and LeuD. It depends on [4Fe-4S] cluster as a cofactor.

It catalyses the reaction (2R,3S)-3-isopropylmalate = (2S)-2-isopropylmalate. Its pathway is amino-acid biosynthesis; L-leucine biosynthesis; L-leucine from 3-methyl-2-oxobutanoate: step 2/4. Its function is as follows. Catalyzes the isomerization between 2-isopropylmalate and 3-isopropylmalate, via the formation of 2-isopropylmaleate. The polypeptide is 3-isopropylmalate dehydratase large subunit (Elusimicrobium minutum (strain Pei191)).